Consider the following 132-residue polypeptide: uncharacterized protein (132 aa).

It belongs to the mycobacterial PPE family.

This is an uncharacterized protein from Mycobacterium tuberculosis (strain ATCC 25618 / H37Rv).